A 345-amino-acid polypeptide reads, in one-letter code: GDSL esterase/lipase At1g23500 (345 aa).

A signal peptide spans 1-24 (MNFSLLSTMLMALSSVCLFFVGYA). The Nucleophile role is filled by serine 42. Asparagine 103 is a glycosylation site (N-linked (GlcNAc...) asparagine). Active-site residues include aspartate 320 and histidine 323.

This sequence belongs to the 'GDSL' lipolytic enzyme family.

It localises to the secreted. This Arabidopsis thaliana (Mouse-ear cress) protein is GDSL esterase/lipase At1g23500.